Here is a 179-residue protein sequence, read N- to C-terminus: Large ribosomal subunit protein bL9 (179 aa).

Belongs to the bacterial ribosomal protein bL9 family.

Binds to the 23S rRNA. This Bartonella bacilliformis (strain ATCC 35685 / KC583 / Herrer 020/F12,63) protein is Large ribosomal subunit protein bL9.